A 418-amino-acid polypeptide reads, in one-letter code: Imidazolonepropionase (418 aa).

Fe(3+)-binding residues include His80 and His82. His80 and His82 together coordinate Zn(2+). 4-imidazolone-5-propanoate contacts are provided by Arg89, Tyr152, and His185. An N-formimidoyl-L-glutamate-binding site is contributed by Tyr152. A Fe(3+)-binding site is contributed by His250. Zn(2+) is bound at residue His250. Gln253 serves as a coordination point for 4-imidazolone-5-propanoate. Fe(3+) is bound at residue Asp325. Asp325 lines the Zn(2+) pocket. Residues Asn327 and Gly329 each coordinate N-formimidoyl-L-glutamate. Ser330 contributes to the 4-imidazolone-5-propanoate binding site.

It belongs to the metallo-dependent hydrolases superfamily. HutI family. Zn(2+) is required as a cofactor. The cofactor is Fe(3+).

It is found in the cytoplasm. It carries out the reaction 4-imidazolone-5-propanoate + H2O = N-formimidoyl-L-glutamate. It participates in amino-acid degradation; L-histidine degradation into L-glutamate; N-formimidoyl-L-glutamate from L-histidine: step 3/3. Functionally, catalyzes the hydrolytic cleavage of the carbon-nitrogen bond in imidazolone-5-propanoate to yield N-formimidoyl-L-glutamate. It is the third step in the universal histidine degradation pathway. This Solibacter usitatus (strain Ellin6076) protein is Imidazolonepropionase.